The following is a 106-amino-acid chain: Urease subunit beta (106 aa).

The protein belongs to the urease beta subunit family. As to quaternary structure, heterotrimer of UreA (gamma), UreB (beta) and UreC (alpha) subunits. Three heterotrimers associate to form the active enzyme.

It is found in the cytoplasm. It carries out the reaction urea + 2 H2O + H(+) = hydrogencarbonate + 2 NH4(+). Its pathway is nitrogen metabolism; urea degradation; CO(2) and NH(3) from urea (urease route): step 1/1. The polypeptide is Urease subunit beta (Prochlorococcus marinus (strain MIT 9215)).